Here is a 495-residue protein sequence, read N- to C-terminus: Keratin, type II cytoskeletal 74 (495 aa).

A head region spans residues 1–105 (MASCHTAGHR…DPEIQKVRAQ (105 aa)). Positions 106-141 (EREQIKALNDKFASFIDKVRFLEQQNQVLQTKWELL) are coil 1A. In terms of domain architecture, IF rod spans 106–419 (EREQIKALND…KLLEGEENRM (314 aa)). A linker 1 region spans residues 142–160 (QQLDLSNCRRNLEPVYEAH). Residues 161–252 (ISNLRKQLEM…CLYDEEISQL (92 aa)) are coil 1B. The segment at 253 to 276 (QTHASETSVILSMDNNRDLDLAGI) is linker 12. Residues 277 to 415 (IAEVRAHYED…ATYRKLLEGE (139 aa)) form a coil 2 region. The segment at 416–495 (ENRMSGENPS…AAGTLARKTT (80 aa)) is tail. Residues 449–495 (DSEAGNAVGSPSTPRNSQSKTRGSSVDPRDAQDESAAAAGTLARKTT) are disordered. Over residues 457–472 (GSPSTPRNSQSKTRGS) the composition is skewed to polar residues.

It belongs to the intermediate filament family. As to quaternary structure, heterotetramer of two type I and two type II keratins. As to expression, expressed in epidermis with a particularly strong staining in the nail matrix, nail bed and hyponychium (at protein level).

Functionally, has a role in hair formation. Specific component of keratin intermediate filaments in the inner root sheath (IRS) of the hair follicle. The protein is Keratin, type II cytoskeletal 74 of Mus musculus (Mouse).